A 244-amino-acid polypeptide reads, in one-letter code: Phosphoribosylaminoimidazole-succinocarboxamide synthase (244 aa).

This sequence belongs to the SAICAR synthetase family.

The enzyme catalyses 5-amino-1-(5-phospho-D-ribosyl)imidazole-4-carboxylate + L-aspartate + ATP = (2S)-2-[5-amino-1-(5-phospho-beta-D-ribosyl)imidazole-4-carboxamido]succinate + ADP + phosphate + 2 H(+). It functions in the pathway purine metabolism; IMP biosynthesis via de novo pathway; 5-amino-1-(5-phospho-D-ribosyl)imidazole-4-carboxamide from 5-amino-1-(5-phospho-D-ribosyl)imidazole-4-carboxylate: step 1/2. This Prochlorococcus marinus (strain SARG / CCMP1375 / SS120) protein is Phosphoribosylaminoimidazole-succinocarboxamide synthase.